The chain runs to 920 residues: MADHSASGAPALSTNIESGKFDEKAAEAAAYQPKPKVEDDEDEDIDALIEDLESHDGHDAEEEEEEATPGGGRVVPEDMLQTDTRVGLTSEEVVQRRRKYGLNQMKEEKENHFLKFLGFFVGPIQFVMEGAAVLAAGLEDWVDFGVICGLLLLNAVVGFVQEFQAGSIVDELKKTLALKAVVLRDGTLKEIEAPEVVPGDILQVEEGTIIPADGRIVTDDAFLQVDQSALTGESLAVDKHKGDQVFASSAVKRGEAFVVITATGDNTFVGRAAALVNAASGGSGHFTEVLNGIGTILLILVIFTLLIVWVSSFYRSNPIVQILEFTLAITIIGVPVGLPAVVTTTMAVGAAYLAKKKAIVQKLSAIESLAGVEILCSDKTGTLTKNKLSLHDPYTVAGVDPEDLMLTACLAASRKKKGIDAIDKAFLKSLKYYPRAKSVLSKYKVLQFHPFDPVSKKVVAVVESPQGERITCVKGAPLFVLKTVEEDHPIPEEVDQAYKNKVAEFATRGFRSLGVARKRGEGSWEILGIMPCMDPPRHDTYKTVCEAKTLGLSIKMLTGDAVGIARETSRQLGLGTNIYNAERLGLGGGGDMPGSEVYDFVEAADGFAEVFPQHKYNVVEILQQRGYLVAMTGDGVNDAPSLKKADTGIAVEGSSDAARSAADIVFLAPGLGAIIDALKTSRQIFHRMYAYVVYRIALSIHLEIFLGLWIAILNRSLNIELVVFIAIFADVATLAIAYDNAPYSQTPVKWNLPKLWGMSVLLGVVLAVGTWITVTTMYAQGENGGIVQNFGNMDEVLFLQISLTENWLIFITRANGPFWSSIPSWQLSGAIFLVDILATCFTIWGWFEHSDTSIVAVVRIWIFSFGIFCIMGGVYYILQDSVGFDNLMHGKSPKGNQKQRSLEDFVVSLQRVSTQHEKSQ.

Residues 1 to 77 form a disordered region; that stretch reads MADHSASGAP…TPGGGRVVPE (77 aa). Over 1 to 115 the chain is Cytoplasmic; sequence MADHSASGAP…KEEKENHFLK (115 aa). Positions 38-51 are enriched in acidic residues; that stretch reads EDDEDEDIDALIED. Residues 116–138 traverse the membrane as a helical segment; it reads FLGFFVGPIQFVMEGAAVLAAGL. The Extracellular portion of the chain corresponds to 139-140; that stretch reads ED. Residues 141 to 160 form a helical membrane-spanning segment; sequence WVDFGVICGLLLLNAVVGFV. The Cytoplasmic portion of the chain corresponds to 161–291; that stretch reads QEFQAGSIVD…GSGHFTEVLN (131 aa). The helical transmembrane segment at 292 to 314 threads the bilayer; that stretch reads GIGTILLILVIFTLLIVWVSSFY. At 315–321 the chain is on the extracellular side; the sequence is RSNPIVQ. Residues 322–354 traverse the membrane as a helical segment; sequence ILEFTLAITIIGVPVGLPAVVTTTMAVGAAYLA. Topologically, residues 355–687 are cytoplasmic; the sequence is KKKAIVQKLS…LKTSRQIFHR (333 aa). Asp-378 acts as the 4-aspartylphosphate intermediate in catalysis. The Mg(2+) site is built by Asp-634 and Asp-638. Residues 688–713 traverse the membrane as a helical segment; the sequence is MYAYVVYRIALSIHLEIFLGLWIAIL. Residues 714-720 are Extracellular-facing; the sequence is NRSLNIE. A helical transmembrane segment spans residues 721–738; that stretch reads LVVFIAIFADVATLAIAY. Residues 739 to 754 lie on the Cytoplasmic side of the membrane; sequence DNAPYSQTPVKWNLPK. Residues 755-779 traverse the membrane as a helical segment; sequence LWGMSVLLGVVLAVGTWITVTTMYA. Residues 780–806 lie on the Extracellular side of the membrane; the sequence is QGENGGIVQNFGNMDEVLFLQISLTEN. 2 helical membrane passes run 807–826 and 827–847; these read WLIFITRANGPFWSSIPSWQ and LSGAIFLVDILATCFTIWGWF. Topologically, residues 848–853 are extracellular; sequence EHSDTS. A helical transmembrane segment spans residues 854–878; that stretch reads IVAVVRIWIFSFGIFCIMGGVYYIL. Topologically, residues 879–920 are cytoplasmic; the sequence is QDSVGFDNLMHGKSPKGNQKQRSLEDFVVSLQRVSTQHEKSQ.

The protein belongs to the cation transport ATPase (P-type) (TC 3.A.3) family. Type IIIA subfamily.

The protein localises to the cell membrane. The enzyme catalyses ATP + H2O + H(+)(in) = ADP + phosphate + 2 H(+)(out). The plasma membrane ATPase of plants and fungi is a hydrogen ion pump. The proton gradient it generates drives the active transport of nutrients by H(+)-symport. The resulting external acidification and/or internal alkinization may mediate growth responses. The protein is Plasma membrane ATPase (pma-1) of Neurospora crassa (strain ATCC 24698 / 74-OR23-1A / CBS 708.71 / DSM 1257 / FGSC 987).